Here is a 302-residue protein sequence, read N- to C-terminus: Glutaminase (302 aa).

Positions 61, 111, 155, 162, 186, 238, and 256 each coordinate substrate.

Belongs to the glutaminase family. As to quaternary structure, homotetramer.

The catalysed reaction is L-glutamine + H2O = L-glutamate + NH4(+). This is Glutaminase from Pseudomonas fluorescens (strain Pf0-1).